Reading from the N-terminus, the 312-residue chain is Glyoxylate/hydroxypyruvate reductase A (312 aa).

The active site involves Arg227. Catalysis depends on His275, which acts as the Proton donor.

It belongs to the D-isomer specific 2-hydroxyacid dehydrogenase family. GhrA subfamily.

It localises to the cytoplasm. The catalysed reaction is glycolate + NADP(+) = glyoxylate + NADPH + H(+). It catalyses the reaction (R)-glycerate + NAD(+) = 3-hydroxypyruvate + NADH + H(+). It carries out the reaction (R)-glycerate + NADP(+) = 3-hydroxypyruvate + NADPH + H(+). Its function is as follows. Catalyzes the NADPH-dependent reduction of glyoxylate and hydroxypyruvate into glycolate and glycerate, respectively. The protein is Glyoxylate/hydroxypyruvate reductase A of Shigella boydii serotype 18 (strain CDC 3083-94 / BS512).